Consider the following 361-residue polypeptide: Peptide chain release factor 1 (361 aa).

At glutamine 236 the chain carries N5-methylglutamine.

It belongs to the prokaryotic/mitochondrial release factor family. Post-translationally, methylated by PrmC. Methylation increases the termination efficiency of RF1.

Its subcellular location is the cytoplasm. Functionally, peptide chain release factor 1 directs the termination of translation in response to the peptide chain termination codons UAG and UAA. This is Peptide chain release factor 1 from Levilactobacillus brevis (strain ATCC 367 / BCRC 12310 / CIP 105137 / JCM 1170 / LMG 11437 / NCIMB 947 / NCTC 947) (Lactobacillus brevis).